The primary structure comprises 287 residues: Bifunctional protein FolD (287 aa).

NADP(+) is bound by residues 166–168 (GAS) and Ile232.

Belongs to the tetrahydrofolate dehydrogenase/cyclohydrolase family. Homodimer.

The catalysed reaction is (6R)-5,10-methylene-5,6,7,8-tetrahydrofolate + NADP(+) = (6R)-5,10-methenyltetrahydrofolate + NADPH. It carries out the reaction (6R)-5,10-methenyltetrahydrofolate + H2O = (6R)-10-formyltetrahydrofolate + H(+). The protein operates within one-carbon metabolism; tetrahydrofolate interconversion. In terms of biological role, catalyzes the oxidation of 5,10-methylenetetrahydrofolate to 5,10-methenyltetrahydrofolate and then the hydrolysis of 5,10-methenyltetrahydrofolate to 10-formyltetrahydrofolate. The protein is Bifunctional protein FolD of Chromohalobacter salexigens (strain ATCC BAA-138 / DSM 3043 / CIP 106854 / NCIMB 13768 / 1H11).